A 298-amino-acid chain; its full sequence is tRNA dimethylallyltransferase (298 aa).

12-19 (GPTASGKT) contributes to the ATP binding site. 14-19 (TASGKT) is a binding site for substrate. Residues 37-40 (DSRQ) are interaction with substrate tRNA.

The protein belongs to the IPP transferase family. Monomer. The cofactor is Mg(2+).

It catalyses the reaction adenosine(37) in tRNA + dimethylallyl diphosphate = N(6)-dimethylallyladenosine(37) in tRNA + diphosphate. Functionally, catalyzes the transfer of a dimethylallyl group onto the adenine at position 37 in tRNAs that read codons beginning with uridine, leading to the formation of N6-(dimethylallyl)adenosine (i(6)A). The chain is tRNA dimethylallyltransferase from Synechococcus sp. (strain CC9902).